Consider the following 130-residue polypeptide: Holo-[acyl-carrier-protein] synthase (130 aa).

Mg(2+) is bound by residues Asp-9 and Glu-58.

It belongs to the P-Pant transferase superfamily. AcpS family. It depends on Mg(2+) as a cofactor.

Its subcellular location is the cytoplasm. It carries out the reaction apo-[ACP] + CoA = holo-[ACP] + adenosine 3',5'-bisphosphate + H(+). Functionally, transfers the 4'-phosphopantetheine moiety from coenzyme A to a Ser of acyl-carrier-protein. This is Holo-[acyl-carrier-protein] synthase from Mycobacterium tuberculosis (strain CDC 1551 / Oshkosh).